Consider the following 108-residue polypeptide: Succinate dehydrogenase assembly factor 4, mitochondrial (108 aa).

The transit peptide at 1–20 directs the protein to the mitochondrion; that stretch reads MTPSRLPWLLSWVSATAWRA. Residues 31 to 108 form a disordered region; the sequence is RKTSSSQGGK…WERKGRCIDF (78 aa). 2 stretches are compositionally biased toward basic and acidic residues: residues 52-87 and 95-108; these read KLPE…EKGG and RYGD…CIDF.

The protein belongs to the SDHAF4 family. In terms of assembly, interacts with SDHA in its FAD-bound form.

The protein localises to the mitochondrion matrix. Its function is as follows. Plays an essential role in the assembly of succinate dehydrogenase (SDH), an enzyme complex (also referred to as respiratory complex II) that is a component of both the tricarboxylic acid (TCA) cycle and the mitochondrial electron transport chain, and which couples the oxidation of succinate to fumarate with the reduction of ubiquinone (coenzyme Q) to ubiquinol. Binds to the flavoprotein subunit SDHA in its FAD-bound form, blocking the generation of excess reactive oxygen species (ROS) and facilitating its assembly with the iron-sulfur protein subunit SDHB into the SDH catalytic dimer. This chain is Succinate dehydrogenase assembly factor 4, mitochondrial, found in Homo sapiens (Human).